Here is a 418-residue protein sequence, read N- to C-terminus: Cytochrome P450 monooxygenase ABA2 (418 aa).

Cys355 provides a ligand contact to heme.

Belongs to the cytochrome P450 family. The cofactor is heme.

Its pathway is hormone biosynthesis. Its function is as follows. Cytochrome P450 monooxygenase involved in the biosynthesis of abscisic acid (ABA), a phytohormone that acts antagonistically toward salicylic acid (SA), jasmonic acid (JA) and ethylene (ETH) signaling, to impede plant defense responses. During pathogen-host interaction, ABA plays a dual role in disease severity by increasing plant susceptibility and accelerating pathogenesis in the fungus itself. The first step of the pathway catalyzes the reaction from farnesyl diphosphate to alpha-ionylideneethane performed by the alpha-ionylideneethane synthase ABA3 via a three-step reaction mechanism involving 2 neutral intermediates, beta-farnesene and allofarnesene. The cytochrome P450 monooxygenase ABA1 might then be involved in the conversion of alpha-ionylideneethane to alpha-ionylideneacetic acid. Alpha-ionylideneacetic acid is further converted to abscisic acid in 2 steps involving the cytochrome P450 monooxygenase ABA2 and the short-chain dehydrogenase/reductase ABA4, via the intermediates 1'-deoxy-ABA or 1',4'-trans-diol-ABA, depending on the order of action of these 2 enzymes. ABA2 is responsible for the hydroxylation of carbon atom C-1' and ABA4 might be involved in the oxidation of the C-4' carbon atom. In Pyricularia oryzae (strain Y34) (Rice blast fungus), this protein is Cytochrome P450 monooxygenase ABA2.